A 168-amino-acid polypeptide reads, in one-letter code: Venom nerve growth factor (168 aa).

The signal sequence occupies residues 1 to 18 (MSMLCYTLIIAFLIGIWA). Residues 19–123 (APKSEDNVSL…ADSLNRNIRA (105 aa)) constitute a propeptide that is removed on maturation. N-linked (GlcNAc...) asparagine glycosylation occurs at Asn25. Residues 48–70 (LKTSQNTDQHSPAPKKAEDQEFG) are disordered. N-linked (GlcNAc...) asparagine glycosylation occurs at Asn148.

This sequence belongs to the NGF-beta family. In terms of assembly, homodimer; non-covalently linked. In terms of tissue distribution, expressed by the venom gland.

It is found in the secreted. Functionally, nerve growth factor is important for the development and maintenance of the sympathetic and sensory nervous systems. It stimulates division and differentiation of sympathetic and embryonic sensory neurons as well as basal forebrain cholinergic neurons in the brain. Its relevance in the snake venom is not clear. However, it has been shown to inhibit metalloproteinase-dependent proteolysis of platelet glycoprotein Ib alpha, suggesting a metalloproteinase inhibition to prevent metalloprotease autodigestion and/or protection against prey proteases. In Echis ocellatus (Ocellated saw-scaled viper), this protein is Venom nerve growth factor.